Here is a 95-residue protein sequence, read N- to C-terminus: uncharacterized protein (95 aa).

The signal sequence occupies residues 1-21 (MKKITLFFTALLCLFSTSVLA).

This is an uncharacterized protein from Haemophilus influenzae (strain ATCC 51907 / DSM 11121 / KW20 / Rd).